A 372-amino-acid chain; its full sequence is Lung adenoma susceptibility protein 2 (372 aa).

The first 31 residues, 1 to 31 (MAKSKTKHRLCSQESSVSALLASCTLSGSNS), serve as a signal peptide directing secretion. Phosphoserine is present on Ser161. The interval 248 to 268 (KSPVPVNSDDSPQQTSRAKSA) is disordered. Positions 255-265 (SDDSPQQTSRA) are enriched in polar residues.

The protein resides in the secreted. In terms of biological role, might play a role in cell proliferation. This Homo sapiens (Human) protein is Lung adenoma susceptibility protein 2 (LAS2).